Consider the following 133-residue polypeptide: Large ribosomal subunit protein eL32z (133 aa).

Belongs to the eukaryotic ribosomal protein eL32 family.

The polypeptide is Large ribosomal subunit protein eL32z (RPL32A) (Arabidopsis thaliana (Mouse-ear cress)).